The chain runs to 559 residues: DDB1- and CUL4-associated factor 10 (559 aa).

The disordered stretch occupies residues 1–119 (MFPFGPHSPG…HGLGAGLGGP (119 aa)). A phosphoserine mark is found at Ser53, Ser63, Ser89, and Ser92. The span at 56–86 (RPGAPSLSPAPRSGELGLPGAPESSTASAPG) shows a compositional bias: low complexity. Over residues 87–97 (EPSPPSPPCRR) the composition is skewed to pro residues. Arg134 carries the omega-N-methylarginine modification. WD repeat units lie at residues 166 to 205 (RTHG…HIKT), 209 to 247 (AHED…TKVC), 251 to 290 (GHTS…EDGC), and 296 to 335 (FHTR…KSLE). Ser349 carries the post-translational modification Phosphoserine. Residues 350 to 367 (SSDLTTSSSSSGPRVSGS) are compositionally biased toward low complexity. The segment at 350 to 396 (SSDLTTSSSSSGPRVSGSPCHHSDSNSSEKHMSRASQREGVSPRNSL) is disordered. The span at 370 to 381 (HHSDSNSSEKHM) shows a compositional bias: basic and acidic residues. 3 WD repeats span residues 408–448 (DHGN…QEGA), 470–508 (VGRG…SELV), and 526–559 (SHND…QPKF).

This sequence belongs to the WD repeat DCAF10 family. In terms of assembly, interacts with DDB1.

It functions in the pathway protein modification; protein ubiquitination. May function as a substrate receptor for CUL4-DDB1 E3 ubiquitin-protein ligase complex. In Homo sapiens (Human), this protein is DDB1- and CUL4-associated factor 10 (DCAF10).